The chain runs to 959 residues: Translation initiation factor IF-2 (959 aa).

The span at 1-10 shows a compositional bias: basic and acidic residues; that stretch reads MSDKTNDDKT. Residues 1–374 are disordered; that stretch reads MSDKTNDDKT…SQMQETREKI (374 aa). A compositionally biased stretch (polar residues) spans 27 to 37; that stretch reads EQSTVRQNFSH. Low complexity-rich tracts occupy residues 63-118 and 128-138; these read AAAA…VTKP and QRPGGQQAQRP. Composition is skewed to basic and acidic residues over residues 154-225 and 232-241; these read SEMD…EAAK and ARSERRDDAR. Positions 246-284 are enriched in low complexity; that stretch reads GARPQQAGRPQGGRPQPAGRPQQGSPRPAPIIADAAPIA. Positions 318-333 are enriched in basic and acidic residues; sequence PEVRAPKVVKGEDDRR. Residues 457-626 form the tr-type G domain; that stretch reads SRPPVVTIMG…LLQAEMLDLK (170 aa). The interval 466 to 473 is G1; it reads GHVDHGKT. 466–473 serves as a coordination point for GTP; the sequence is GHVDHGKT. Residues 491 to 495 form a G2 region; that stretch reads GITQH. The G3 stretch occupies residues 512-515; sequence DTPG. GTP-binding positions include 512–516 and 566–569; these read DTPGH and NKID. The interval 566–569 is G4; it reads NKID. The tract at residues 602–604 is G5; it reads SAK.

Belongs to the TRAFAC class translation factor GTPase superfamily. Classic translation factor GTPase family. IF-2 subfamily.

It is found in the cytoplasm. In terms of biological role, one of the essential components for the initiation of protein synthesis. Protects formylmethionyl-tRNA from spontaneous hydrolysis and promotes its binding to the 30S ribosomal subunits. Also involved in the hydrolysis of GTP during the formation of the 70S ribosomal complex. This is Translation initiation factor IF-2 from Brucella canis (strain ATCC 23365 / NCTC 10854 / RM-666).